Reading from the N-terminus, the 66-residue chain is Large ribosomal subunit protein bL32 (66 aa).

A compositionally biased stretch (basic residues) spans 1-19 (MAIVPKRKTSKQRKHKRNT). Positions 1-21 (MAIVPKRKTSKQRKHKRNTHS) are disordered.

It belongs to the bacterial ribosomal protein bL32 family.

The protein is Large ribosomal subunit protein bL32 of Mycoplasmopsis synoviae (strain 53) (Mycoplasma synoviae).